A 463-amino-acid chain; its full sequence is Phosphomannomutase (463 aa).

Ser-103 (phosphoserine intermediate) is an active-site residue. Mg(2+)-binding residues include Ser-103, Asp-248, Asp-250, and Asp-252.

It belongs to the phosphohexose mutase family. Requires Mg(2+) as cofactor.

The protein resides in the cell membrane. It catalyses the reaction alpha-D-mannose 1-phosphate = D-mannose 6-phosphate. It functions in the pathway nucleotide-sugar biosynthesis; GDP-alpha-D-mannose biosynthesis; alpha-D-mannose 1-phosphate from D-fructose 6-phosphate: step 2/2. Its pathway is bacterial outer membrane biogenesis; LPS O-antigen biosynthesis. Involved in GDP-mannose biosynthesis which serves as the activated sugar nucleotide precursor for mannose residues in cell surface polysaccharides. The polypeptide is Phosphomannomutase (rfbB) (Vibrio cholerae serotype O1 (strain ATCC 39315 / El Tor Inaba N16961)).